The sequence spans 68 residues: MARITVDDCLKKIPNRFDMTLVATIRARQLSVGGSPMVEPARDKPTVIALREISQGLVGTDILTTGPI.

The protein belongs to the RNA polymerase subunit omega family. In terms of assembly, the RNAP catalytic core consists of 2 alpha, 1 beta, 1 beta' and 1 omega subunit. When a sigma factor is associated with the core the holoenzyme is formed, which can initiate transcription.

The enzyme catalyses RNA(n) + a ribonucleoside 5'-triphosphate = RNA(n+1) + diphosphate. Its function is as follows. Promotes RNA polymerase assembly. Latches the N- and C-terminal regions of the beta' subunit thereby facilitating its interaction with the beta and alpha subunits. In Nitrosospira multiformis (strain ATCC 25196 / NCIMB 11849 / C 71), this protein is DNA-directed RNA polymerase subunit omega.